The chain runs to 1726 residues: Merozoite surface protein 1 (1726 aa).

A signal peptide spans 1–19 (MKIIFFLCSFLFFIINTQC). Residues 61–124 (KGASAQSGTS…SGTSGTSPSS (64 aa)) are compositionally biased toward low complexity. A disordered region spans residues 61 to 149 (KGASAQSGTS…PPADASDSDA (89 aa)). Residues 125–134 (RSNTLPRSNT) are compositionally biased toward polar residues. A glycan (N-linked (GlcNAc...) asparagine) is linked at Asn133. Over residues 135-144 (SSGASPPADA) the composition is skewed to low complexity. N-linked (GlcNAc...) asparagine glycans are attached at residues Asn272, Asn501, Asn567, and Asn638. The tract at residues 735–771 (SETTEDGGHSTHTLSQSGETEVTEETEETEETVGHTT) is disordered. Positions 755–765 (EVTEETEETEE) are enriched in acidic residues. Asn827, Asn924, Asn944, Asn990, Asn1016, Asn1114, and Asn1221 each carry an N-linked (GlcNAc...) asparagine glycan. A compositionally biased stretch (low complexity) spans 914–952 (TGTSSTSSPGNTTVNTAQSATHSNSQNQQSNASSTNTQN). The disordered stretch occupies residues 914–961 (TGTSSTSSPGNTTVNTAQSATHSNSQNQQSNASSTNTQNGVAVSSGPA). Disordered regions lie at residues 1254 to 1284 (VTPPQPDVTPSPLSVRVSGSSGSTKEETQIP) and 1476 to 1497 (KEKFPSSPPTTPPSPAKTDEQK). Polar residues predominate over residues 1270-1284 (VSGSSGSTKEETQIP). Positions 1481 to 1490 (SSPPTTPPSP) are enriched in pro residues. N-linked (GlcNAc...) asparagine glycosylation is present at Asn1613. 2 consecutive EGF-like domains span residues 1617-1657 (HQCV…VENP) and 1658-1705 (NPTC…IFCS). Disulfide bonds link Cys1619/Cys1630, Cys1624/Cys1640, Cys1642/Cys1653, Cys1661/Cys1674, Cys1668/Cys1688, and Cys1690/Cys1704. Residue Ser1705 is the site of GPI-anchor amidated serine attachment. Residues 1706–1726 (SSNFLGISFLLILMLILYSFI) constitute a propeptide, removed in mature form.

In terms of assembly, forms a complex composed of subunits p83, p30, p38, and p42 which remain non-covalently associated; the complex is formed at the merozoite surface prior to egress from host erythrocytes. Forms a complex composed of processed MSP1 subunits, MSP6 subunit p36 and MSP7; the complex is formed at the merozoite surface prior to egress from host erythrocytes. Within the complex, interacts (via subunit p38) with MSP6 subunit p36 and (via subunits p83, p30 and p38) with MSP7 (via subunit p22). Forms a complex composed of MSP1, MSP6, DBLMSP1 and DBLMSP2. Within the complex, interacts (via subunit p38) with DBLMSP1 and DBLMSP2. Forms a complex composed of MSP1, and rhoptry proteins RhopH3, RAP1 and CLAG9/RhopH3. Within the complex, interacts (via subunits p42 and p19) with RhopH3 (via C-terminus). Forms a complex composed of MSP1, MSP6, MSP7, MSP9 and MSP3; within the complex, MSP6 and MSP9 mediate the binding to the host erythrocyte. Interacts (via subunits p19 and p42) with MSP9; the interaction is direct; MSP1 subunits p19 or p42, and MSP9 form a co-ligand complex that interacts with host SLC4A1/Band 3 protein. May interact with PFD6. Interacts with host spectrin. As to quaternary structure, interacts with host glycophorin GYPA in a sialic acid-independent manner. Interacts with host proinflammatory cytokine S100P; the interaction blocks S100P inflammatory and chemotactic activities. In terms of assembly, interacts with host SLC4A1/Band 3 (via 5ABC region) on the host erythrocyte surface in a sialic acid-independent manner. The p190 precursor is cleaved by SUB1 prior to merozoite egress into 4 subunits p83, p30, p38, and p42 which remain non-covalently associated. SUB1-mediated proteolytic cleavage occurs in an orderly manner; the first cleavage occurs at the p30/p38 site, followed by cleavage at the p83/p30 site, the last cleavage occurs at the p38/p42 site. The order of cleavage is essential for parasite viability. SUB1-mediated processing is essential for merozoite egress. In a second processing step during erythrocyte invasion, p42 is cleaved by SUB2 into p33 and p19; the latter remains attached to the merozoite surface via its GPI-anchor and is endocytosed during the subsequent ring stage.

It is found in the cell membrane. The protein resides in the secreted. It localises to the vacuole membrane. Functionally, during the asexual blood stage, involved in merozoite egress from host erythrocytes possibly via its interaction with the host cytoskeleton protein spectrin resulting in the destabilization of the host cytoskeleton and thus leading to erythrocyte cell membrane rupture. Involved in the binding to host erythrocytes and is required for host erythrocyte invasion. By binding to host proinflammatory cytokine S100P may interfere with host immune responses. Its function is as follows. Involved in merozoite invasion of host erythrocytes. May play a role in the biogenesis and/or function of the food vacuole during the intraerythrocytic development. The protein is Merozoite surface protein 1 of Plasmodium falciparum (isolate Palo Alto / Uganda).